A 130-amino-acid polypeptide reads, in one-letter code: Large-conductance mechanosensitive channel (130 aa).

A run of 2 helical transmembrane segments spans residues 11–31 (FALK…AAFG) and 70–90 (GAFI…FIFV).

Belongs to the MscL family. In terms of assembly, homopentamer.

Its subcellular location is the cell membrane. In terms of biological role, channel that opens in response to stretch forces in the membrane lipid bilayer. May participate in the regulation of osmotic pressure changes within the cell. The sequence is that of Large-conductance mechanosensitive channel from Listeria welshimeri serovar 6b (strain ATCC 35897 / DSM 20650 / CCUG 15529 / CIP 8149 / NCTC 11857 / SLCC 5334 / V8).